Here is a 727-residue protein sequence, read N- to C-terminus: Pollen-specific leucine-rich repeat extensin-like protein 3 (727 aa).

Positions 1-22 (MPHIYKQPLGIFQGFVPTLTDA) are cleaved as a signal peptide. The stretch at 19-43 (LTDAEVSFIAQRQLLTLPENGELPD) is one LRR 1 repeat. An N-linked (GlcNAc...) asparagine glycan is attached at Asn-80. 9 LRR repeats span residues 107–131 (VAVV…LGLM), 132–154 (TDVA…SFEK), 156–179 (SLMH…VLSW), 180–202 (PAVK…ELFK), 203–226 (KDLD…LGES), 228–249 (ASVV…IGNM), 250–273 (KNLN…IGKL), 275–296 (NVNV…SFVG), and 297–321 (LTSM…ICKL). Asn-326 carries an N-linked (GlcNAc...) asparagine glycan. Residues 381–727 (SKDKCAGGSS…SPPPPMFQGY (347 aa)) form a disordered region. 5 stretches are compositionally biased toward pro residues: residues 397-419 (SPSP…PQPN), 446-457 (SPPPASSPPTSP), 466-479 (VHKP…PQPN), 492-677 (SPPP…PKMS), and 718-727 (SPPPPMFQGY). Residues 432 to 727 (SPPPPQQPHH…SPPPPMFQGY (296 aa)) are contains the Ser-Pro(4) repeats.

In terms of processing, hydroxylated on proline residues in the S-P-P-P-P repeat. O-glycosylated on hydroxyprolines. Expressed in flowers, stamen, pollen, and pollinated carpels.

It localises to the secreted. It is found in the cell wall. Modulates cell morphogenesis by regulating cell wall formation and assembly, and/or growth polarization. The protein is Pollen-specific leucine-rich repeat extensin-like protein 3 (PEX3) of Arabidopsis thaliana (Mouse-ear cress).